A 433-amino-acid chain; its full sequence is Glutamate-1-semialdehyde 2,1-aminomutase (433 aa).

At Lys271 the chain carries N6-(pyridoxal phosphate)lysine.

This sequence belongs to the class-III pyridoxal-phosphate-dependent aminotransferase family. HemL subfamily. In terms of assembly, homodimer. The cofactor is pyridoxal 5'-phosphate.

Its subcellular location is the cytoplasm. The enzyme catalyses (S)-4-amino-5-oxopentanoate = 5-aminolevulinate. Its pathway is porphyrin-containing compound metabolism; protoporphyrin-IX biosynthesis; 5-aminolevulinate from L-glutamyl-tRNA(Glu): step 2/2. It participates in porphyrin-containing compound metabolism; chlorophyll biosynthesis. In Prochlorococcus marinus (strain MIT 9515), this protein is Glutamate-1-semialdehyde 2,1-aminomutase.